We begin with the raw amino-acid sequence, 398 residues long: Na(+)/H(+) antiporter NhaA (398 aa).

A run of 11 helical transmembrane segments spans residues 21–41 (LGGY…NSPL), 66–86 (VLHW…GLEI), 101–121 (IVLP…VYLL), 132–152 (GWAI…ALLG), 161–181 (IFLT…IAVF), 184–204 (AELN…LCVL), 216–236 (LLVG…ATLA), 274–294 (LLIV…GMGI), 305–325 (IALG…WLAI), 343–363 (GVAL…ALAF), and 374–394 (IGVL…LRVL).

It belongs to the NhaA Na(+)/H(+) (TC 2.A.33) antiporter family.

It is found in the cell inner membrane. It carries out the reaction Na(+)(in) + 2 H(+)(out) = Na(+)(out) + 2 H(+)(in). In terms of biological role, na(+)/H(+) antiporter that extrudes sodium in exchange for external protons. The chain is Na(+)/H(+) antiporter NhaA from Bordetella bronchiseptica (strain ATCC BAA-588 / NCTC 13252 / RB50) (Alcaligenes bronchisepticus).